Consider the following 506-residue polypeptide: Glutamate--tRNA ligase (506 aa).

The 'HIGH' region signature appears at 21 to 31; sequence PSPTGTPHVGM. The 'KMSKS' region signature appears at 265 to 269; that stretch reads KLSKR. Lysine 268 contacts ATP.

It belongs to the class-I aminoacyl-tRNA synthetase family. Glutamate--tRNA ligase type 1 subfamily. Monomer.

It is found in the cytoplasm. It carries out the reaction tRNA(Glu) + L-glutamate + ATP = L-glutamyl-tRNA(Glu) + AMP + diphosphate. Its function is as follows. Catalyzes the attachment of glutamate to tRNA(Glu) in a two-step reaction: glutamate is first activated by ATP to form Glu-AMP and then transferred to the acceptor end of tRNA(Glu). The protein is Glutamate--tRNA ligase of Bifidobacterium longum (strain DJO10A).